The following is a 332-amino-acid chain: Holliday junction branch migration complex subunit RuvB (332 aa).

The interval 1-181 is large ATPase domain (RuvB-L); sequence MSRILDNEIM…FGITGHMEYY (181 aa). ATP contacts are provided by residues leucine 20, arginine 21, glycine 62, lysine 65, threonine 66, threonine 67, 128–130, arginine 171, tyrosine 181, and arginine 218; that span reads EDF. A Mg(2+)-binding site is contributed by threonine 66. The small ATPAse domain (RuvB-S) stretch occupies residues 182–252; sequence AHADLTEIVE…ITDKALTMLD (71 aa). The tract at residues 255–332 is head domain (RuvB-H); sequence HEGLDYVDQK…EHLGYEYNEK (78 aa). 4 residues coordinate DNA: arginine 291, arginine 310, arginine 312, and arginine 315.

It belongs to the RuvB family. Homohexamer. Forms an RuvA(8)-RuvB(12)-Holliday junction (HJ) complex. HJ DNA is sandwiched between 2 RuvA tetramers; dsDNA enters through RuvA and exits via RuvB. An RuvB hexamer assembles on each DNA strand where it exits the tetramer. Each RuvB hexamer is contacted by two RuvA subunits (via domain III) on 2 adjacent RuvB subunits; this complex drives branch migration. In the full resolvosome a probable DNA-RuvA(4)-RuvB(12)-RuvC(2) complex forms which resolves the HJ.

It localises to the cytoplasm. The enzyme catalyses ATP + H2O = ADP + phosphate + H(+). In terms of biological role, the RuvA-RuvB-RuvC complex processes Holliday junction (HJ) DNA during genetic recombination and DNA repair, while the RuvA-RuvB complex plays an important role in the rescue of blocked DNA replication forks via replication fork reversal (RFR). RuvA specifically binds to HJ cruciform DNA, conferring on it an open structure. The RuvB hexamer acts as an ATP-dependent pump, pulling dsDNA into and through the RuvAB complex. RuvB forms 2 homohexamers on either side of HJ DNA bound by 1 or 2 RuvA tetramers; 4 subunits per hexamer contact DNA at a time. Coordinated motions by a converter formed by DNA-disengaged RuvB subunits stimulates ATP hydrolysis and nucleotide exchange. Immobilization of the converter enables RuvB to convert the ATP-contained energy into a lever motion, pulling 2 nucleotides of DNA out of the RuvA tetramer per ATP hydrolyzed, thus driving DNA branch migration. The RuvB motors rotate together with the DNA substrate, which together with the progressing nucleotide cycle form the mechanistic basis for DNA recombination by continuous HJ branch migration. Branch migration allows RuvC to scan DNA until it finds its consensus sequence, where it cleaves and resolves cruciform DNA. The chain is Holliday junction branch migration complex subunit RuvB from Streptococcus pneumoniae (strain CGSP14).